The sequence spans 672 residues: Acetoacetyl-CoA synthetase (672 aa).

The protein belongs to the ATP-dependent AMP-binding enzyme family.

It localises to the cytoplasm. The protein resides in the cytosol. The catalysed reaction is acetoacetate + ATP + CoA = acetoacetyl-CoA + AMP + diphosphate. Activates acetoacetate to acetoacetyl-CoA. The sequence is that of Acetoacetyl-CoA synthetase (aacs) from Xenopus tropicalis (Western clawed frog).